The following is a 349-amino-acid chain: Macrophage-capping protein (349 aa).

Methionine 1 bears the N-acetylmethionine mark. Gelsolin-like repeat units follow at residues 28 to 107 (KLKP…DLFM), 147 to 222 (KNIR…AEMI), and 264 to 342 (LTKV…PIFK). The Nuclear localization signal signature appears at 138 to 147 (RKLYQVKGKK). Serine 338 is subject to Phosphoserine.

The protein belongs to the villin/gelsolin family. In terms of assembly, interacts with NUP62. Interacts with NUTF2 and RAN; involved in CAPG nuclear import. Phosphorylated.

It localises to the nucleus. The protein resides in the cytoplasm. Its subcellular location is the melanosome. It is found in the cell projection. The protein localises to the lamellipodium. It localises to the ruffle. Its function is as follows. Calcium-sensitive protein which reversibly blocks the barbed ends of actin filaments but does not sever preformed actin filaments. May play an important role in macrophage function. May play a role in regulating cytoplasmic and/or nuclear structures through potential interactions with actin. May bind DNA. Uncapping occurs either when Ca(2+) falls or when the concentration of polyphosphoinositide rises, both at low and high Ca(2+). The sequence is that of Macrophage-capping protein (Capg) from Rattus norvegicus (Rat).